A 163-amino-acid polypeptide reads, in one-letter code: Photosystem II extrinsic protein V (163 aa).

Positions 1–26 are cleaved as a signal peptide; it reads MFRRLIGVVVATVLLSFQLLVGSATA. Heme c-binding residues include cysteine 63, cysteine 66, histidine 67, and histidine 118.

The protein belongs to the cytochrome c family. PsbV subfamily. PSII is composed of 1 copy each of membrane proteins PsbA, PsbB, PsbC, PsbD, PsbE, PsbF, PsbH, PsbI, PsbJ, PsbK, PsbL, PsbM, PsbT, PsbX, PsbY, PsbZ, Psb30/Ycf12, peripheral proteins PsbO, CyanoQ (PsbQ), PsbU, PsbV and a large number of cofactors. It forms dimeric complexes. Heme c serves as cofactor.

Its subcellular location is the cellular thylakoid membrane. One of the extrinsic, lumenal subunits of photosystem II (PSII). PSII is a light-driven water plastoquinone oxidoreductase, using light energy to abstract electrons from H(2)O, generating a proton gradient subsequently used for ATP formation. The extrinsic proteins stabilize the structure of photosystem II oxygen-evolving complex (OEC), the ion environment of oxygen evolution and protect the OEC against heat-induced inactivation. Low-potential cytochrome c that plays a role in the OEC of PSII. This Nostoc punctiforme (strain ATCC 29133 / PCC 73102) protein is Photosystem II extrinsic protein V.